A 511-amino-acid chain; its full sequence is Bifunctional purine biosynthesis protein PurH (511 aa).

One can recognise an MGS-like domain in the interval M1 to S146.

This sequence belongs to the PurH family.

The catalysed reaction is (6R)-10-formyltetrahydrofolate + 5-amino-1-(5-phospho-beta-D-ribosyl)imidazole-4-carboxamide = 5-formamido-1-(5-phospho-D-ribosyl)imidazole-4-carboxamide + (6S)-5,6,7,8-tetrahydrofolate. It carries out the reaction IMP + H2O = 5-formamido-1-(5-phospho-D-ribosyl)imidazole-4-carboxamide. Its pathway is purine metabolism; IMP biosynthesis via de novo pathway; 5-formamido-1-(5-phospho-D-ribosyl)imidazole-4-carboxamide from 5-amino-1-(5-phospho-D-ribosyl)imidazole-4-carboxamide (10-formyl THF route): step 1/1. The protein operates within purine metabolism; IMP biosynthesis via de novo pathway; IMP from 5-formamido-1-(5-phospho-D-ribosyl)imidazole-4-carboxamide: step 1/1. The protein is Bifunctional purine biosynthesis protein PurH of Microcystis aeruginosa (strain NIES-843 / IAM M-2473).